We begin with the raw amino-acid sequence, 372 residues long: Serine/threonine-protein kinase 17B (372 aa).

The Protein kinase domain maps to 33–293 (ILTSKELGRG…AEICLSHSWL (261 aa)). ATP-binding positions include 39-47 (LGRGKFAVV) and Lys-62. The Proton acceptor role is filled by Asp-158. Residues 305–362 (EETSSSSQTQDHSVRSSEDKTSKSSCNGTCGDREDKENIPEDSSMVSKRFRFDDSLPN) are disordered. Residues 316 to 326 (HSVRSSEDKTS) show a composition bias toward basic and acidic residues.

Belongs to the protein kinase superfamily. CAMK Ser/Thr protein kinase family. DAP kinase subfamily. In terms of assembly, interacts with CHP1; the interaction induces CHP1 to translocate from the Golgi to the nucleus. In terms of processing, autophosphorylated. Highly expressed in placenta, lung, pancreas. Lower levels in heart, brain, liver, skeletal muscle and kidney.

The protein localises to the nucleus. It is found in the cell membrane. It localises to the endoplasmic reticulum-Golgi intermediate compartment. It carries out the reaction L-seryl-[protein] + ATP = O-phospho-L-seryl-[protein] + ADP + H(+). The catalysed reaction is L-threonyl-[protein] + ATP = O-phospho-L-threonyl-[protein] + ADP + H(+). Phosphorylates myosin light chains. Acts as a positive regulator of apoptosis. The chain is Serine/threonine-protein kinase 17B (STK17B) from Homo sapiens (Human).